The sequence spans 283 residues: Protoheme IX farnesyltransferase 1 (283 aa).

Transmembrane regions (helical) follow at residues 14–34, 35–55, 84–104, 107–127, 133–153, 163–183, 208–228, 231–251, and 258–278; these read IALM…TKVD, PVAL…SAVF, LGFA…NAAF, VVAL…TVWL, TNII…AAAV, VLAL…AILL, ILAN…LGLL, VYGF…VVLV, and WAGW…IAVF.

Belongs to the UbiA prenyltransferase family. Protoheme IX farnesyltransferase subfamily.

It localises to the cell inner membrane. The enzyme catalyses heme b + (2E,6E)-farnesyl diphosphate + H2O = Fe(II)-heme o + diphosphate. It functions in the pathway porphyrin-containing compound metabolism; heme O biosynthesis; heme O from protoheme: step 1/1. Converts heme B (protoheme IX) to heme O by substitution of the vinyl group on carbon 2 of heme B porphyrin ring with a hydroxyethyl farnesyl side group. This is Protoheme IX farnesyltransferase 1 from Paramagnetospirillum magneticum (strain ATCC 700264 / AMB-1) (Magnetospirillum magneticum).